The chain runs to 145 residues: Bacilliredoxin GK2368 (145 aa).

This sequence belongs to the bacilliredoxin family.

In Geobacillus kaustophilus (strain HTA426), this protein is Bacilliredoxin GK2368.